Reading from the N-terminus, the 102-residue chain is MALLKANKDLISAGLKEFSVLLNQQVFNDPLVSEEDMVTVVEDWMNFYINYYRQQVTGEPQERDKALQELRQELNTLANPFLAKYRDFLKSHELPSHPPPSS.

Belongs to the AHSP family. As to quaternary structure, monomer. Forms a heterodimer with free alpha-hemoglobin. Does not bind beta-hemoglobin nor alpha(2)beta(2) hemoglobin A. In terms of tissue distribution, expressed in blood and bone marrow.

It is found in the cytoplasm. Acts as a chaperone to prevent the harmful aggregation of alpha-hemoglobin during normal erythroid cell development. Specifically protects free alpha-hemoglobin from precipitation. It is predicted to modulate pathological states of alpha-hemoglobin excess such as beta-thalassemia. In Homo sapiens (Human), this protein is Alpha-hemoglobin-stabilizing protein (AHSP).